The chain runs to 188 residues: MKLVPVALLYLGSLAFLGADTARLDVASEFRKKWNKWAVSRGKRELRVSSSYPTGLAEVKAGPAQTLIRTQDVKGASRNPQTSGPDAARIRVKRYRQSMNNFQGPRSFGCRFGTCTVQKLAHQIYQFTDNDKDGVAPRSKISPQGYGRRRRRSLPEPGLRRTLLFPEPRPGGAPAPRAHQVLANLLKM.

The first 21 residues, 1-21 (MKLVPVALLYLGSLAFLGADT), serve as a signal peptide directing secretion. R41 carries the post-translational modification Arginine amide. The propeptide occupies 45–92 (ELRVSSSYPTGLAEVKAGPAQTLIRTQDVKGASRNPQTSGPDAARIRV). A disulfide bridge links C110 with C115. The interval 131-176 (DKDGVAPRSKISPQGYGRRRRRSLPEPGLRRTLLFPEPRPGGAPAP) is disordered. Y146 carries the post-translational modification Tyrosine amide. The propeptide at 153 to 188 (SLPEPGLRRTLLFPEPRPGGAPAPRAHQVLANLLKM) is preproAM C-terminal fragment.

The protein belongs to the adrenomedullin family.

The protein resides in the secreted. In terms of biological role, adrenomedullin/ADM and proadrenomedullin N-20 terminal peptide/PAMP are peptide hormones that act as potent hypotensive and vasodilatator agents. Numerous actions have been reported most related to the physiologic control of fluid and electrolyte homeostasis. ADM function is mediated by the CALCRL-RAMP2 and CALCRL-RAMP3 receptor complexes with ADM showing the highest potency for the CALCRL-RAMP2 complex. In Canis lupus familiaris (Dog), this protein is Pro-adrenomedullin (ADM).